A 61-amino-acid chain; its full sequence is U-poneritoxin(01)-Om5b (61 aa).

The first 23 residues, 1-23, serve as a signal peptide directing secretion; it reads MKLSALSLAFAIILMMTIMYTKA. Residues 24–41 constitute a propeptide that is removed on maturation; it reads DADASADAEADADAEAEA. Glutamine 59 is subject to Glutamine amide.

Belongs to the formicidae venom precursor-01 superfamily. Truncated sequences of this peptide have also been found in the venom. It is possible they have been cleaved in the venom. As to expression, expressed by the venom gland.

The protein localises to the secreted. Functionally, acidic peptide with potent hemolytic activities. It also shows low antimicrobial activities against E.coli (MIC=50uM), as well as histamine-releasing activity (28.3% at 10 uM). Does not have activity against S.aureus, and S.cerevisiae. This is U-poneritoxin(01)-Om5b from Odontomachus monticola (Trap-jaw ant).